The chain runs to 530 residues: Alkali-sensitive linkage protein 1 (530 aa).

An N-terminal signal peptide occupies residues 1–18 (MRTTFATVALAFLSTVGA). An N-linked (GlcNAc...) asparagine glycan is attached at N55. Residues 69-90 (SVTESSDDGASTALPTTSTESV) are disordered. N-linked (GlcNAc...) asparagine glycosylation is found at N120 and N128.

Its subcellular location is the endoplasmic reticulum. The protein localises to the golgi apparatus. It is found in the secreted. The protein resides in the cell wall. This chain is Alkali-sensitive linkage protein 1 (asl1), found in Schizosaccharomyces pombe (strain 972 / ATCC 24843) (Fission yeast).